A 155-amino-acid chain; its full sequence is Transcriptional repressor NrdR (155 aa).

A zinc finger spans residues 3-34 (CPFCGHSNTQVLDTRMSEDGDAVRRRRRCEAC). The 91-residue stretch at 49–139 (PAIVKKNGSR…VYRSFEDVSE (91 aa)) folds into the ATP-cone domain.

The protein belongs to the NrdR family. Zn(2+) serves as cofactor.

Functionally, negatively regulates transcription of bacterial ribonucleotide reductase nrd genes and operons by binding to NrdR-boxes. The protein is Transcriptional repressor NrdR of Cupriavidus necator (strain ATCC 17699 / DSM 428 / KCTC 22496 / NCIMB 10442 / H16 / Stanier 337) (Ralstonia eutropha).